The primary structure comprises 458 residues: uncharacterized protein (458 aa).

It belongs to the MG032/MG096/MG288 family.

This is an uncharacterized protein from Mycoplasma pneumoniae (strain ATCC 29342 / M129 / Subtype 1) (Mycoplasmoides pneumoniae).